The following is an 890-amino-acid chain: DNA mismatch repair protein MutS (890 aa).

645 to 652 (GPNMAGKS) serves as a coordination point for ATP.

Belongs to the DNA mismatch repair MutS family.

This protein is involved in the repair of mismatches in DNA. It is possible that it carries out the mismatch recognition step. This protein has a weak ATPase activity. This chain is DNA mismatch repair protein MutS, found in Rickettsia rickettsii (strain Iowa).